Reading from the N-terminus, the 52-residue chain is uncharacterized protein (52 aa).

The disordered stretch occupies residues 1-52 (MFGFIYRDPSPAPQGKIRDGSKDPKTPGGGGGGGGGISPNGGAPLGGKGFSM). The segment covering 16–25 (KIRDGSKDPK) has biased composition (basic and acidic residues). The span at 27-52 (PGGGGGGGGGISPNGGAPLGGKGFSM) shows a compositional bias: gly residues.

This is an uncharacterized protein from Dictyostelium discoideum (Social amoeba).